Consider the following 181-residue polypeptide: Large ribosomal subunit protein uL5 (181 aa).

This sequence belongs to the universal ribosomal protein uL5 family. Part of the 50S ribosomal subunit; part of the 5S rRNA/L5/L18/L25 subcomplex. Contacts the 5S rRNA and the P site tRNA. Forms a bridge to the 30S subunit in the 70S ribosome.

This is one of the proteins that bind and probably mediate the attachment of the 5S RNA into the large ribosomal subunit, where it forms part of the central protuberance. In the 70S ribosome it contacts protein S13 of the 30S subunit (bridge B1b), connecting the 2 subunits; this bridge is implicated in subunit movement. Contacts the P site tRNA; the 5S rRNA and some of its associated proteins might help stabilize positioning of ribosome-bound tRNAs. The sequence is that of Large ribosomal subunit protein uL5 from Mesomycoplasma hyopneumoniae (strain 7448) (Mycoplasma hyopneumoniae).